Reading from the N-terminus, the 143-residue chain is MSIIKEFKEFAVKGNVMDLAVGVIIGGAFSKIVDSVVKDLIMPVIGVLTGGLDFSNKFVLLGTIPPSFKGNPDSFKDLQAAGVAAFGYGSFITVAINFVILAFIIFLMVKFINKLRKPEEAAPAATPEDVVLLREIRDSLKQR.

2 helical membrane passes run 10 to 30 and 89 to 109; these read FAVKGNVMDLAVGVIIGGAFS and GSFITVAINFVILAFIIFLMV.

Belongs to the MscL family. As to quaternary structure, homopentamer.

The protein resides in the cell inner membrane. Channel that opens in response to stretch forces in the membrane lipid bilayer. May participate in the regulation of osmotic pressure changes within the cell. This Burkholderia cenocepacia (strain HI2424) protein is Large-conductance mechanosensitive channel.